Here is a 263-residue protein sequence, read N- to C-terminus: Virulence plasmid protein pGP6-D-related protein (263 aa).

It belongs to the UPF0137 (pGP6-D) family.

The chain is Virulence plasmid protein pGP6-D-related protein from Chlamydia trachomatis serovar D (strain ATCC VR-885 / DSM 19411 / UW-3/Cx).